A 430-amino-acid chain; its full sequence is Tyrosine--tRNA ligase (430 aa).

L-tyrosine is bound at residue Tyr36. Positions 41–50 (PTASSLHVGS) match the 'HIGH' region motif. Residues Tyr170 and Gln174 each contribute to the L-tyrosine site. Positions 230 to 234 (KMGKT) match the 'KMSKS' region motif. Residue Lys233 participates in ATP binding. The S4 RNA-binding domain occupies 362–427 (VPAFELFDEI…GKKNYHRLVL (66 aa)).

It belongs to the class-I aminoacyl-tRNA synthetase family. TyrS type 1 subfamily. In terms of assembly, homodimer.

It localises to the cytoplasm. It carries out the reaction tRNA(Tyr) + L-tyrosine + ATP = L-tyrosyl-tRNA(Tyr) + AMP + diphosphate + H(+). In terms of biological role, catalyzes the attachment of tyrosine to tRNA(Tyr) in a two-step reaction: tyrosine is first activated by ATP to form Tyr-AMP and then transferred to the acceptor end of tRNA(Tyr). The protein is Tyrosine--tRNA ligase of Desulfatibacillum aliphaticivorans.